The sequence spans 118 residues: Putative pterin-4-alpha-carbinolamine dehydratase (118 aa).

It belongs to the pterin-4-alpha-carbinolamine dehydratase family.

It catalyses the reaction (4aS,6R)-4a-hydroxy-L-erythro-5,6,7,8-tetrahydrobiopterin = (6R)-L-erythro-6,7-dihydrobiopterin + H2O. The sequence is that of Putative pterin-4-alpha-carbinolamine dehydratase from Xanthomonas campestris pv. campestris (strain 8004).